The sequence spans 646 residues: Glutamine--tRNA ligase protein virJ (646 aa).

The segment at 25-65 is disordered; it reads NELKKRIQKRARKAAAAANRSNAQQEKGNKPAANKPAAKPE. Over residues 38 to 61 the composition is skewed to low complexity; it reads AAAAANRSNAQQEKGNKPAANKPA. Residues 98-108 carry the 'HIGH' region motif; sequence PEPNGYLHLGH. Residues 99–101 and 105–111 contribute to the ATP site; these read EPN and HLGHAKA. L-glutamine-binding residues include aspartate 147 and tyrosine 296. Residues threonine 315, 344–345, and 352–354 contribute to the ATP site; these read RL and MSK. Residues 351-355 carry the 'KMSKS' region motif; the sequence is IMSKR.

This sequence belongs to the class-I aminoacyl-tRNA synthetase family.

The catalysed reaction is tRNA(Gln) + L-glutamine + ATP = L-glutaminyl-tRNA(Gln) + AMP + diphosphate. In terms of biological role, glutamine--tRNA ligase; part of the gene cluster that mediates the biosynthesis of virensols and trichoxide, fungal natural products that contain or are derived from a salicylaldehyde core. VirJ does not seem to play any role in virensols and trichoxide biosynthesis. This chain is Glutamine--tRNA ligase protein virJ, found in Hypocrea virens (strain Gv29-8 / FGSC 10586) (Gliocladium virens).